Reading from the N-terminus, the 368-residue chain is UDP-N-acetylglucosamine--N-acetylmuramyl-(pentapeptide) pyrophosphoryl-undecaprenol N-acetylglucosamine transferase (368 aa).

UDP-N-acetyl-alpha-D-glucosamine is bound by residues 10–12 (TGG), N124, S196, I251, and Q296.

The protein belongs to the glycosyltransferase 28 family. MurG subfamily.

It is found in the cell membrane. It catalyses the reaction Mur2Ac(oyl-L-Ala-gamma-D-Glu-L-Lys-D-Ala-D-Ala)-di-trans,octa-cis-undecaprenyl diphosphate + UDP-N-acetyl-alpha-D-glucosamine = beta-D-GlcNAc-(1-&gt;4)-Mur2Ac(oyl-L-Ala-gamma-D-Glu-L-Lys-D-Ala-D-Ala)-di-trans,octa-cis-undecaprenyl diphosphate + UDP + H(+). It functions in the pathway cell wall biogenesis; peptidoglycan biosynthesis. Functionally, cell wall formation. Catalyzes the transfer of a GlcNAc subunit on undecaprenyl-pyrophosphoryl-MurNAc-pentapeptide (lipid intermediate I) to form undecaprenyl-pyrophosphoryl-MurNAc-(pentapeptide)GlcNAc (lipid intermediate II). This Limosilactobacillus fermentum (strain NBRC 3956 / LMG 18251) (Lactobacillus fermentum) protein is UDP-N-acetylglucosamine--N-acetylmuramyl-(pentapeptide) pyrophosphoryl-undecaprenol N-acetylglucosamine transferase.